Here is a 783-residue protein sequence, read N- to C-terminus: Cyclic di-GMP phosphodiesterase NbdA (783 aa).

The MHYT domain maps to 81–274 (YSPSLVALAF…FTGMAALVLS (194 aa)). 7 consecutive transmembrane segments (helical) span residues 84–104 (SLVA…LDMV), 120–140 (IGAF…MLAF), 150–170 (LPIT…TMYM), 176–196 (FGLL…AAMH), 215–235 (LFAL…AAVP), 255–275 (LLAG…VLSV), and 292–312 (LGWL…WAAW). At 313–783 (SEKQRERRLS…APPLRSLNQA (471 aa)) the chain is on the cytoplasmic side. Residues 375 to 507 (KGLAVMFLDL…GRNNAQFFSR (133 aa)) form the GGDEF domain. In terms of domain architecture, EAL spans 516–770 (ELQMEEELRQ…ALEEFLRAYR (255 aa)). 5 residues coordinate 3',3'-c-di-GMP: Q537, E551, R555, N610, and N615. E551 lines the Mg(2+) pocket. Mg(2+) is bound at residue N610. E642, D672, and D673 together coordinate Mg(2+). Residue D672 participates in 3',3'-c-di-GMP binding. Residue R696 coordinates 3',3'-c-di-GMP. Residue E729 participates in Mg(2+) binding. E732 and Y751 together coordinate 3',3'-c-di-GMP.

Mg(2+) is required as a cofactor.

The protein localises to the cell inner membrane. It carries out the reaction 3',3'-c-di-GMP + H2O = 5'-phosphoguanylyl(3'-&gt;5')guanosine + H(+). With respect to regulation, PDE activity is stimulated by GTP. It could also be stimulated by NO. Its function is as follows. Displays c-di-GMP-specific phosphodiesterase (PDE) activity. Seems to play a specific role in nitric oxide (NO)-induced biofilm dispersion. Enhanced NbdA synthesis in the presence of NO increases PDE activity, leading to reduced cellular c-di-GMP levels and biofilm dispersion. Does not show diguanylate cyclase (DGC) activity. The sequence is that of Cyclic di-GMP phosphodiesterase NbdA from Pseudomonas aeruginosa (strain ATCC 15692 / DSM 22644 / CIP 104116 / JCM 14847 / LMG 12228 / 1C / PRS 101 / PAO1).